We begin with the raw amino-acid sequence, 355 residues long: MRIVDRESAEGRRERITLVPETLDDLWHLTYVLEPGDLVAGDTTRRIQRDDDKMRDTGGEREPMWIRIDVNNVEFAKFANRLRVGGDIVDCSREDQLGFHHTFNVEEHDELTVEKVWQVDQLERLEEAVEAAEQPDVAIATVEEGQAHIHTVAQYGVEERASITGTTGKGEYARSRDELFEELAAILRRLDAEAIILAGPGFTKQDALEHIEDNAPEAAEKIQVVDTASVGDRGVHEVLKRGAVDRIQTETRVSKEAELIDELMERIGEGEKAAYGVDEVAEAAEFGAIETLLILDERLREERAGEGDWAVDVNDIIENVEQQGGEVVVFSHEFDPGQQLANLGGIAALLRYRLS.

This sequence belongs to the eukaryotic release factor 1 family. Pelota subfamily. Monomer. Requires a divalent metal cation as cofactor.

The protein resides in the cytoplasm. Functionally, may function in recognizing stalled ribosomes, interact with stem-loop structures in stalled mRNA molecules, and effect endonucleolytic cleavage of the mRNA. May play a role in the release non-functional ribosomes and degradation of damaged mRNAs. Has endoribonuclease activity. This Natronomonas pharaonis (strain ATCC 35678 / DSM 2160 / CIP 103997 / JCM 8858 / NBRC 14720 / NCIMB 2260 / Gabara) (Halobacterium pharaonis) protein is Protein pelota homolog.